We begin with the raw amino-acid sequence, 439 residues long: Trigger factor (439 aa).

The PPIase FKBP-type domain occupies 163–248; that stretch reads GDRVTIDYRG…LNKLEAPKLP (86 aa).

Belongs to the FKBP-type PPIase family. Tig subfamily.

It is found in the cytoplasm. The catalysed reaction is [protein]-peptidylproline (omega=180) = [protein]-peptidylproline (omega=0). Functionally, involved in protein export. Acts as a chaperone by maintaining the newly synthesized protein in an open conformation. Functions as a peptidyl-prolyl cis-trans isomerase. The chain is Trigger factor from Nitrosomonas europaea (strain ATCC 19718 / CIP 103999 / KCTC 2705 / NBRC 14298).